The primary structure comprises 508 residues: Pentatricopeptide repeat-containing protein At5g48730, chloroplastic (508 aa).

Polar residues predominate over residues 1 to 10 (MVSLSTSTSH). The disordered stretch occupies residues 1-22 (MVSLSTSTSHAPPLPTNRRTAE). The transit peptide at 1-28 (MVSLSTSTSHAPPLPTNRRTAERTFTVR) directs the protein to the chloroplast. PPR repeat units lie at residues 149 to 183 (NVGIYVKLIVMLGKCKQPEKAHELFQEMINEGCVV), 184 to 214 (NHEVYTALVSAYSRSGRFDAAFTLLERMKSS), 220 to 254 (DVHTYSILIKSFLQVFAFDKVQDLLSDMRRQGIRP), 255 to 290 (NTITYNTLIDAYGKAKMFVEMESTLIQMLGEDDCKP), 291 to 325 (DSWTMNSTLRAFGGNGQIEMMENCYEKFQSSGIEP), 326 to 360 (NIRTFNILLDSYGKSGNYKKMSAVMEYMQKYHYSW), 361 to 395 (TIVTYNVVIDAFGRAGDLKQMEYLFRLMQSERIFP), 396 to 430 (SCVTLCSLVRAYGRASKADKIGGVLRFIENSDIRL), 431 to 465 (DLVFFNCLVDAYGRMEKFAEMKGVLELMEKKGFKP), and 466 to 500 (DKITYRTMVKAYRISGMTTHVKELHGVVESVGEAQ).

The protein belongs to the PPR family. P subfamily.

It localises to the plastid. The protein localises to the chloroplast. The sequence is that of Pentatricopeptide repeat-containing protein At5g48730, chloroplastic from Arabidopsis thaliana (Mouse-ear cress).